A 337-amino-acid polypeptide reads, in one-letter code: Quinolinate synthase (337 aa).

Residues His-40 and Ser-57 each contribute to the iminosuccinate site. Cys-102 serves as a coordination point for [4Fe-4S] cluster. Iminosuccinate contacts are provided by residues 128 to 130 (YVN) and Ser-145. [4Fe-4S] cluster is bound at residue Cys-189. Residues 215-217 (HPE) and Thr-243 contribute to the iminosuccinate site. Cys-288 provides a ligand contact to [4Fe-4S] cluster.

Belongs to the quinolinate synthase family. Type 2 subfamily. Requires [4Fe-4S] cluster as cofactor.

The protein resides in the cytoplasm. It carries out the reaction iminosuccinate + dihydroxyacetone phosphate = quinolinate + phosphate + 2 H2O + H(+). It functions in the pathway cofactor biosynthesis; NAD(+) biosynthesis; quinolinate from iminoaspartate: step 1/1. Functionally, catalyzes the condensation of iminoaspartate with dihydroxyacetone phosphate to form quinolinate. This is Quinolinate synthase from Mycobacterium sp. (strain JLS).